The sequence spans 95 residues: Co-chaperonin GroES (95 aa).

It belongs to the GroES chaperonin family. In terms of assembly, heptamer of 7 subunits arranged in a ring. Interacts with the chaperonin GroEL.

The protein localises to the cytoplasm. In terms of biological role, together with the chaperonin GroEL, plays an essential role in assisting protein folding. The GroEL-GroES system forms a nano-cage that allows encapsulation of the non-native substrate proteins and provides a physical environment optimized to promote and accelerate protein folding. GroES binds to the apical surface of the GroEL ring, thereby capping the opening of the GroEL channel. This is Co-chaperonin GroES from Rickettsia akari (strain Hartford).